We begin with the raw amino-acid sequence, 244 residues long: 1-(5-phosphoribosyl)-5-[(5-phosphoribosylamino)methylideneamino] imidazole-4-carboxamide isomerase (244 aa).

The Proton acceptor role is filled by Asp8. Asp129 functions as the Proton donor in the catalytic mechanism.

This sequence belongs to the HisA/HisF family.

The protein localises to the cytoplasm. The catalysed reaction is 1-(5-phospho-beta-D-ribosyl)-5-[(5-phospho-beta-D-ribosylamino)methylideneamino]imidazole-4-carboxamide = 5-[(5-phospho-1-deoxy-D-ribulos-1-ylimino)methylamino]-1-(5-phospho-beta-D-ribosyl)imidazole-4-carboxamide. It functions in the pathway amino-acid biosynthesis; L-histidine biosynthesis; L-histidine from 5-phospho-alpha-D-ribose 1-diphosphate: step 4/9. In Chelativorans sp. (strain BNC1), this protein is 1-(5-phosphoribosyl)-5-[(5-phosphoribosylamino)methylideneamino] imidazole-4-carboxamide isomerase.